Reading from the N-terminus, the 398-residue chain is 4-hydroxy-3-methylbut-2-enyl diphosphate reductase (398 aa).

Residue Cys66 coordinates [4Fe-4S] cluster. His96 is a (2E)-4-hydroxy-3-methylbut-2-enyl diphosphate binding site. Dimethylallyl diphosphate is bound at residue His96. Position 96 (His96) interacts with isopentenyl diphosphate. Residue Cys157 participates in [4Fe-4S] cluster binding. His185 is a (2E)-4-hydroxy-3-methylbut-2-enyl diphosphate binding site. His185 is a dimethylallyl diphosphate binding site. Isopentenyl diphosphate is bound at residue His185. Glu187 acts as the Proton donor in catalysis. Thr250 lines the (2E)-4-hydroxy-3-methylbut-2-enyl diphosphate pocket. [4Fe-4S] cluster is bound at residue Cys288. (2E)-4-hydroxy-3-methylbut-2-enyl diphosphate is bound by residues Ser317, Ser318, Asn319, and Ser380. Residues Ser317, Ser318, Asn319, and Ser380 each contribute to the dimethylallyl diphosphate site. Isopentenyl diphosphate is bound by residues Ser317, Ser318, Asn319, and Ser380.

The protein belongs to the IspH family. [4Fe-4S] cluster serves as cofactor.

The catalysed reaction is isopentenyl diphosphate + 2 oxidized [2Fe-2S]-[ferredoxin] + H2O = (2E)-4-hydroxy-3-methylbut-2-enyl diphosphate + 2 reduced [2Fe-2S]-[ferredoxin] + 2 H(+). The enzyme catalyses dimethylallyl diphosphate + 2 oxidized [2Fe-2S]-[ferredoxin] + H2O = (2E)-4-hydroxy-3-methylbut-2-enyl diphosphate + 2 reduced [2Fe-2S]-[ferredoxin] + 2 H(+). Its pathway is isoprenoid biosynthesis; dimethylallyl diphosphate biosynthesis; dimethylallyl diphosphate from (2E)-4-hydroxy-3-methylbutenyl diphosphate: step 1/1. It functions in the pathway isoprenoid biosynthesis; isopentenyl diphosphate biosynthesis via DXP pathway; isopentenyl diphosphate from 1-deoxy-D-xylulose 5-phosphate: step 6/6. Catalyzes the conversion of 1-hydroxy-2-methyl-2-(E)-butenyl 4-diphosphate (HMBPP) into a mixture of isopentenyl diphosphate (IPP) and dimethylallyl diphosphate (DMAPP). Acts in the terminal step of the DOXP/MEP pathway for isoprenoid precursor biosynthesis. This Prochlorococcus marinus (strain AS9601) protein is 4-hydroxy-3-methylbut-2-enyl diphosphate reductase.